The chain runs to 442 residues: GTPase Der (442 aa).

2 EngA-type G domains span residues 2 to 167 and 175 to 351; these read RTIA…PIQN and FKFC…EQAM. Residues 8–15, 55–59, 119–122, 181–188, 228–232, and 293–296 contribute to the GTP site; these read GKPNVGKS, DTGGI, NKIE, GRPNVGKS, DTAGI, and NKWD. Residues 352–436 enclose the KH-like domain; the sequence is RKIATSLLND…PITLYWQDKN (85 aa).

It belongs to the TRAFAC class TrmE-Era-EngA-EngB-Septin-like GTPase superfamily. EngA (Der) GTPase family. Associates with the 50S ribosomal subunit.

Functionally, GTPase that plays an essential role in the late steps of ribosome biogenesis. This chain is GTPase Der, found in Ureaplasma parvum serovar 3 (strain ATCC 27815 / 27 / NCTC 11736).